The sequence spans 247 residues: MSGDRVLVQPAWVLHRRPWSESSLIVELFSRDFGRIGAVARGGRNSRRWRGLLEPFSPVLASWQGRGELRSLVAAEPDGARPALAGAALASGFYLNELLLRLLRRDDPHPELHPLYGDTLNRLPDEAALRGFECRLLEALGYGLLLLEDMGGEPVHGEAHYRYHLEHGPERLAAVPEAGEGLLVRGRTLLALAGREALAGPSLPEARRLMRAALSLYLGDRPLQSRALYRQLARTPRAATPASPNDH.

The protein belongs to the RecO family.

Involved in DNA repair and RecF pathway recombination. This Alkalilimnicola ehrlichii (strain ATCC BAA-1101 / DSM 17681 / MLHE-1) protein is DNA repair protein RecO.